Consider the following 720-residue polypeptide: Glutaryl-7-aminocephalosporanic-acid acylase (720 aa).

Residues 1 to 29 form the signal peptide; the sequence is MLRVLHRAASALVMATVIGLAPGVAFALA. A propeptide spans 188 to 198 (spacer peptide); that stretch reads EGDPPDLADQG. Ser199 (nucleophile) is an active-site residue. Active-site residues include His221 and Glu653.

The protein belongs to the peptidase S45 family. In terms of assembly, heterodimer of a small subunit and a large subunit processed from the same precursor.

Its subcellular location is the periplasm. The catalysed reaction is (7R)-7-(4-carboxybutanamido)cephalosporanate + H2O = (7R)-7-aminocephalosporanate + glutarate. Its function is as follows. Catalyzes the deacylation of 7 beta-(4-carboxybutanamido)cephalosporanic acid (glutaryl-7-aminocephalosporanic acid or GL-7-ACA) to 7-aminocephalosporanic acid (7-ACA). Cannot efficiently use cephalosporin C (CPC), penicillin G, or ampicillin as substrates. This Brevundimonas diminuta (Pseudomonas diminuta) protein is Glutaryl-7-aminocephalosporanic-acid acylase.